Here is a 1314-residue protein sequence, read N- to C-terminus: MAEPRRVAFISLSPVRRREADFAGAEREPPRLEPQPYREPARAEPAPRADAQPPARDKPLPQREVSRAEPPMALQREPPRPEPPPPPLPLQTPPPRESASRAEPPPRPPKETVRLELVLKDPTDESCVEFSYPELLLCGEQRKKLVHTEDPFTDEHKERQEVEMLAKKFEMKYGGKARKHRKDRLQDLIDIGFGYDETDPFIDNSEAYDELVPASLTTKYGGFYINTGTLQFRQASDTEEDDFTDNQKHKPPKVPKIKEDDIEVKKRKRKEEGEKEKKPRKKVPKQLGVVALNSHKSEKKKKRYKDSLSLAAMIRKFQKEKDALKKESTPKVPVTPSSSSLPKPPCVTTALGDDIPDLGLNSADPDLPIFVSTNEHELFQEAENALEMLDDFDFDRLLDATSDGSPLSESGGENGNTTHPTFPSQVVPKVVPTLPEGLPVLLEKRIEDLRVAAKLFDEEGRKKFFTQDMNNILLDIELQLQELGPVIRSGVYSHLEAFVPCNKETLVKRLKKLHLNVQDDRLREPLQKLKLAVSNVMPEQLFKYQEDCQARSQAKCAKLQADEEREKNGSDDDDDEKPGKRVIGPRKKFHWDDTIRTLLCNLVEIKLGCYELEPNKSQSAEDYLKSFMETEVKPLWPKGWMQARMLFKESRSVHNHLTSAPAKKKVIPASKPKVKECSPKKDPKAPASVVASGGGPSTSSSTSIVASASSSSAPAQETICLDDSLDEDLSFPSASLDLVSEALAVINNGNKGPSVGSRLNVPTTKPRPGLREEKLASIMSKLPLATPKKLDSTQTAHSSSLIAGHTGPVPKKPQDLAHTGISSGLIAGSSIQNPKVSLEPLPARLLQQGLQRSSQIHASSSSQTHVSSSQAQAAASSHALGTSEAQDASSLTQVTKVHQHSAVQQNYVSPLQATISKSQTNPVVKLSNNPQLSCSSQLLKTSDKPLMYRLPLSTPSPGNGSQGPHPLVSRTAPSTTTSSNYLAKAMVSQISTQGFKSPFSMAASPKLAASPKPATSPKPLPSPKPSVSPKPSLSAKPSISTKQISKSNPAPKPAVCPSSSSPNTLVAQSSHSTSNNPVHKQPSGMNISRQSPTLNLLPSNRTSGLPTTKTLQAPSKLTNSSSTGTAGKNSLSGIPMNVPASRGSNLNSSGANRTSLSGGTGSGTQGATKPLSTPHRPTSASGSSVVTASVQSTAGASLLANASPLTLMTSPLSVTNQTVTPFGMLGGLVPVTMPFQFPLELLGFGTDTAGVTATSGSTSAALHHSLTQNLLKSLQPGAQHAAALPHSPLPAHLQQAFNDGGQSKGDTKLPRKPQ.

The interval 1–113 (MAEPRRVAFI…PPPRPPKETV (113 aa)) is disordered. Phosphoserine is present on serine 13. 2 stretches are compositionally biased toward basic and acidic residues: residues 16–31 (RRRE…EPPR) and 55–67 (ARDK…EVSR). The span at 81–96 (PEPPPPPLPLQTPPPR) shows a compositional bias: pro residues. Threonine 229 is subject to Phosphothreonine. Residue serine 236 is modified to Phosphoserine. Positions 236-288 (SDTEEDDFTDNQKHKPPKVPKIKEDDIEVKKRKRKEEGEKEKKPRKKVPKQLG) are disordered. At threonine 238 the chain carries Phosphothreonine. Lysine 258 participates in a covalent cross-link: Glycyl lysine isopeptide (Lys-Gly) (interchain with G-Cter in SUMO2). At serine 297 the chain carries Phosphoserine. Disordered regions lie at residues 322–345 (DALK…PKPP), 400–424 (ATSD…TFPS), 559–584 (LQAD…RVIG), 657–709 (LTSA…ASAS), 785–818 (ATPK…DLAH), 849–893 (GLQR…SLTQ), 948–975 (YRLP…APST), 1003–1185 (ASPK…GSSV), and 1288–1314 (PLPA…RKPQ). A compositionally biased stretch (low complexity) spans 330–341 (PKVPVTPSSSSL). Residues serine 402, serine 405, and serine 408 each carry the phosphoserine modification. Residues 415 to 424 (GNTTHPTFPS) are compositionally biased toward polar residues. Basic and acidic residues-rich tracts occupy residues 560 to 570 (QADEEREKNGS) and 673 to 684 (KVKECSPKKDPK). The residue at position 570 (serine 570) is a Phosphoserine. Over residues 685-709 (APASVVASGGGPSTSSSTSIVASAS) the composition is skewed to low complexity. The span at 792 to 801 (STQTAHSSSL) shows a compositional bias: polar residues. A compositionally biased stretch (low complexity) spans 849–879 (GLQRSSQIHASSSSQTHVSSSQAQAAASSHA). Polar residues predominate over residues 883–893 (SEAQDASSLTQ). Residues 1003 to 1013 (ASPKLAASPKP) are compositionally biased toward low complexity. Residues 1014-1028 (ATSPKPLPSPKPSVS) show a composition bias toward pro residues. Residues 1029–1040 (PKPSLSAKPSIS) show a composition bias toward low complexity. Lysine 1036 is modified (N6-acetyllysine). Polar residues-rich tracts occupy residues 1057–1132 (PSSS…NSLS) and 1142–1153 (RGSNLNSSGANR). The residue at position 1091 (serine 1091) is a Phosphoserine. An N6-acetyllysine modification is found at lysine 1116. Over residues 1305–1314 (GDTKLPRKPQ) the composition is skewed to basic and acidic residues.

The protein belongs to the ubinuclein family.

The chain is Ubinuclein-2 (Ubn2) from Mus musculus (Mouse).